A 106-amino-acid polypeptide reads, in one-letter code: BLOC-1-related complex subunit 7 (106 aa).

The protein belongs to the BORCS7 family. Component of the BLOC-one-related complex (BORC) which is composed of BLOC1S1, BLOC1S2, BORCS5, BORCS6, BORCS7, BORCS8, KXD1 and SNAPIN.

The protein resides in the lysosome membrane. As part of the BORC complex may play a role in lysosomes movement and localization at the cell periphery. Associated with the cytosolic face of lysosomes, the BORC complex may recruit ARL8B and couple lysosomes to microtubule plus-end-directed kinesin motor. The protein is BLOC-1-related complex subunit 7 of Homo sapiens (Human).